The following is a 377-amino-acid chain: Cytochrome c peroxidase, mitochondrial (377 aa).

The transit peptide at 1 to 17 directs the protein to the mitochondrion; it reads MSFRAPNLIRSAAGRRA. The active-site Proton acceptor is the His-138. Heme b is bound at residue His-261. The active-site Tryptophan radical intermediate is Trp-277.

This sequence belongs to the peroxidase family. Cytochrome c peroxidase subfamily. Forms a one-to-one complex with cytochrome c. It depends on heme b as a cofactor.

The protein resides in the mitochondrion matrix. The protein localises to the mitochondrion intermembrane space. The enzyme catalyses 2 Fe(II)-[cytochrome c] + H2O2 + 2 H(+) = 2 Fe(III)-[cytochrome c] + 2 H2O. In terms of biological role, destroys radicals which are normally produced within the cells and which are toxic to biological systems. This is Cytochrome c peroxidase, mitochondrial (CCP1) from Cryptococcus neoformans var. neoformans serotype D (strain JEC21 / ATCC MYA-565) (Filobasidiella neoformans).